Consider the following 484-residue polypeptide: Probable UDP-N-acetylglucosamine pyrophosphorylase (484 aa).

The short motif at Leu107–Gly110 is the Substrate binding element. Residues Leu107–Gly110, Lys121, Gln200, and Gly226 contribute to the UTP site. Residue Asn227 coordinates substrate. Asp255 is a UTP binding site. Residues Glu304–Tyr305 carry the Substrate binding motif. Lys377 is a binding site for UTP. Lys407 is a substrate binding site.

The protein belongs to the UDPGP type 1 family.

The protein resides in the cytoplasm. It catalyses the reaction N-acetyl-alpha-D-glucosamine 1-phosphate + UTP + H(+) = UDP-N-acetyl-alpha-D-glucosamine + diphosphate. It participates in nucleotide-sugar biosynthesis; UDP-N-acetyl-alpha-D-glucosamine biosynthesis; UDP-N-acetyl-alpha-D-glucosamine from N-acetyl-alpha-D-glucosamine 1-phosphate: step 1/1. This chain is Probable UDP-N-acetylglucosamine pyrophosphorylase, found in Caenorhabditis elegans.